A 417-amino-acid polypeptide reads, in one-letter code: Serine--tRNA ligase (417 aa).

Residue 226 to 228 (TSE) coordinates L-serine. ATP contacts are provided by residues 257–259 (RRE) and valine 273. Residue glutamate 280 participates in L-serine binding. Residue 344-347 (EVTS) participates in ATP binding. Threonine 379 provides a ligand contact to L-serine.

It belongs to the class-II aminoacyl-tRNA synthetase family. Type-1 seryl-tRNA synthetase subfamily. In terms of assembly, homodimer. The tRNA molecule binds across the dimer.

The protein resides in the cytoplasm. The catalysed reaction is tRNA(Ser) + L-serine + ATP = L-seryl-tRNA(Ser) + AMP + diphosphate + H(+). The enzyme catalyses tRNA(Sec) + L-serine + ATP = L-seryl-tRNA(Sec) + AMP + diphosphate + H(+). The protein operates within aminoacyl-tRNA biosynthesis; selenocysteinyl-tRNA(Sec) biosynthesis; L-seryl-tRNA(Sec) from L-serine and tRNA(Sec): step 1/1. Catalyzes the attachment of serine to tRNA(Ser). Is also able to aminoacylate tRNA(Sec) with serine, to form the misacylated tRNA L-seryl-tRNA(Sec), which will be further converted into selenocysteinyl-tRNA(Sec). This is Serine--tRNA ligase from Tropheryma whipplei (strain TW08/27) (Whipple's bacillus).